Here is a 415-residue protein sequence, read N- to C-terminus: Interleukin-5 receptor subunit alpha (415 aa).

An N-terminal signal peptide occupies residues 1–17; that stretch reads MVPVLLILVGALATLQA. At 18–339 the chain is on the extracellular side; it reads DLLNHKKFLL…KERKSLVEWH (322 aa). The region spanning 29–120 is the Fibronectin type-III 1 domain; sequence PPVNFTIKAT…VSAELKAPPG (92 aa). Residues Asn-32 and Asn-128 are each glycosylated (N-linked (GlcNAc...) asparagine). Intrachain disulfides connect Cys-131–Cys-152 and Cys-179–Cys-193. Asn-213 and Asn-241 each carry an N-linked (GlcNAc...) asparagine glycan. Residues 238 to 331 form the Fibronectin type-III 2 domain; it reads PPRNVTVEIE…WSQPIYVGKE (94 aa). Cys-266 and Cys-313 are joined by a disulfide. Residues 319–323 carry the WSXWS motif motif; the sequence is WGEWS. The helical transmembrane segment at 340-361 threads the bilayer; it reads LIVLPTAACFVLLIFSLICRVC. Topologically, residues 362–415 are cytoplasmic; that stretch reads HLWTRLFPPVPAPKSNIKDLPVVTEYEKPSNETKIEVVHCVEEVGFEVMGNSTF. The Box 1 motif signature appears at 367–375; the sequence is LFPPVPAPK.

Interacts with IL5. Interacts with CSF2RB. Interacts with JAK2. Interacts with SDCBP. Expressed on eosinophils and basophils. Also on B-cells.

It is found in the membrane. Functionally, cell surface receptor that plays an important role in the survival, differentiation, and chemotaxis of eosinophils. Acts by forming a heterodimeric receptor with CSF2RB subunit and subsequently binding to interleukin-5. In unstimulated conditions, interacts constitutively with JAK2. Heterodimeric receptor activation leads to JAK2 stimulation and subsequent activation of the JAK-STAT pathway. In Mus musculus (Mouse), this protein is Interleukin-5 receptor subunit alpha (Il5ra).